The primary structure comprises 373 residues: Thyroid hormone receptor beta-A (373 aa).

Residues 1–18 (MPSSMSGYIPSYLDKDEL) are modulating. 2 consecutive NR C4-type zinc fingers follow at residues 19-39 (CVVC…CEGC) and 57-81 (CKYE…FKKC). Residues 19–93 (CVVCGDKATG…VGMATDLVLD (75 aa)) constitute a DNA-binding region (nuclear receptor). The 245-residue stretch at 129-373 (EEWELIQVVT…PPLFLEVFED (245 aa)) folds into the NR LBD domain.

Belongs to the nuclear hormone receptor family. NR1 subfamily.

Its subcellular location is the nucleus. Functionally, high affinity receptor for triiodothyronine (T3). The sequence is that of Thyroid hormone receptor beta-A (thrb-a) from Xenopus laevis (African clawed frog).